Consider the following 986-residue polypeptide: Centrosomal protein of 120 kDa (986 aa).

A C2 1 domain is found at 1–112 (MVSKSDQLLI…QETKQAPKWY (112 aa)). The interval 350-424 (ELKTQNEHEP…PNPKASSSVP (75 aa)) is disordered. Polar residues predominate over residues 377-394 (GPKSPTVSPVPSHNQSPP). In terms of domain architecture, C2 2 spans 433–566 (TSNASEVASG…LSSEKTRFLG (134 aa)). A coiled-coil region spans residues 669–925 (ENQLKQKELA…KQYQDSTEIA (257 aa)). The interval 914 to 937 (EQKQYQDSTEIASGKKDGPHGSVL) is disordered. Residues 915–924 (QKQYQDSTEI) are compositionally biased toward polar residues. The residue at position 935 (Ser935) is a Phosphoserine.

This sequence belongs to the CEP120 family. In terms of assembly, interacts with TACC2, TACC3, CCDC52, TALPID3.

The protein resides in the cytoplasm. It localises to the cytoskeleton. The protein localises to the microtubule organizing center. It is found in the centrosome. In terms of biological role, plays a role in the microtubule-dependent coupling of the nucleus and the centrosome. Involved in the processes that regulate centrosome-mediated interkinetic nuclear migration (INM) of neural progenitors and for proper positioning of neurons during brain development. Also implicated in the migration and selfrenewal of neural progenitors. Required for centriole duplication and maturation during mitosis and subsequent ciliogenesis. Required for the recruitment of CEP295 to the proximal end of new-born centrioles at the centriolar microtubule wall during early S phase in a PLK4-dependent manner. This is Centrosomal protein of 120 kDa (CEP120) from Homo sapiens (Human).